The following is a 102-amino-acid chain: MPTKARIRLWSTNIENLNFVVNQIKTLAQKTGVEISGPIPLPTSRMEVPVMRLPHGEGKKKWEHWEMKIHKRIIDIASDERVMRQLMRVRVPDDVYIEIELI.

This sequence belongs to the universal ribosomal protein uS10 family. As to quaternary structure, part of the 30S ribosomal subunit.

Functionally, involved in the binding of tRNA to the ribosomes. In Sulfurisphaera tokodaii (strain DSM 16993 / JCM 10545 / NBRC 100140 / 7) (Sulfolobus tokodaii), this protein is Small ribosomal subunit protein uS10.